A 172-amino-acid polypeptide reads, in one-letter code: Adenine phosphoribosyltransferase (172 aa).

This sequence belongs to the purine/pyrimidine phosphoribosyltransferase family. As to quaternary structure, homodimer.

The protein localises to the cytoplasm. It catalyses the reaction AMP + diphosphate = 5-phospho-alpha-D-ribose 1-diphosphate + adenine. It functions in the pathway purine metabolism; AMP biosynthesis via salvage pathway; AMP from adenine: step 1/1. Catalyzes a salvage reaction resulting in the formation of AMP, that is energically less costly than de novo synthesis. This chain is Adenine phosphoribosyltransferase, found in Anaeromyxobacter dehalogenans (strain 2CP-1 / ATCC BAA-258).